Reading from the N-terminus, the 134-residue chain is Holo-[acyl-carrier-protein] synthase (134 aa).

2 residues coordinate Mg(2+): aspartate 8 and glutamate 57.

Belongs to the P-Pant transferase superfamily. AcpS family. Mg(2+) is required as a cofactor.

It is found in the cytoplasm. It carries out the reaction apo-[ACP] + CoA = holo-[ACP] + adenosine 3',5'-bisphosphate + H(+). In terms of biological role, transfers the 4'-phosphopantetheine moiety from coenzyme A to a Ser of acyl-carrier-protein. The protein is Holo-[acyl-carrier-protein] synthase of Rhizobium etli (strain CIAT 652).